We begin with the raw amino-acid sequence, 90 residues long: Auxin-responsive protein SAUR19 (90 aa).

The protein belongs to the ARG7 family. In terms of assembly, interacts with and inhibits PP2C-D subfamily of type 2C phosphatases such as PP2C67/PP2C-D1, PP2C64/PP2C-D5 and PP2C46/PP2C-D6.

The protein resides in the cell membrane. Functionally, provide a mechanistic link between auxin and plasma membrane H(+)-ATPases (PM H(+)-ATPases, e.g. AHA1 and AHA2), and triggers PM H(+)-ATPases activity by promoting phosphorylation of their C-terminal autoinhibitory domain as a result of PP2C-D subfamily of type 2C phosphatases inhibition, thus leading to the acidification of the apoplast and the facilitation of solutes and water uptake to drive cell expansion. Prevents the apical hook maintenance of etiolated seedlings. Functions as positive effectors of cell expansion through modulation of auxin transport. The polypeptide is Auxin-responsive protein SAUR19 (Arabidopsis thaliana (Mouse-ear cress)).